Here is a 249-residue protein sequence, read N- to C-terminus: 2,3-bisphosphoglycerate-dependent phosphoglycerate mutase (249 aa).

Residues 8–15 (RHGESAWN), 21–22 (TG), Arg60, 87–90 (ERHY), Lys98, 114–115 (RR), and 183–184 (GN) each bind substrate. Catalysis depends on His9, which acts as the Tele-phosphohistidine intermediate. The Proton donor/acceptor role is filled by Glu87.

The protein belongs to the phosphoglycerate mutase family. BPG-dependent PGAM subfamily.

It catalyses the reaction (2R)-2-phosphoglycerate = (2R)-3-phosphoglycerate. It functions in the pathway carbohydrate degradation; glycolysis; pyruvate from D-glyceraldehyde 3-phosphate: step 3/5. Functionally, catalyzes the interconversion of 2-phosphoglycerate and 3-phosphoglycerate. The polypeptide is 2,3-bisphosphoglycerate-dependent phosphoglycerate mutase (Methanosphaerula palustris (strain ATCC BAA-1556 / DSM 19958 / E1-9c)).